The chain runs to 90 residues: Putative membrane protein insertion efficiency factor (90 aa).

Belongs to the UPF0161 family.

Its subcellular location is the cell membrane. Could be involved in insertion of integral membrane proteins into the membrane. In Oceanobacillus iheyensis (strain DSM 14371 / CIP 107618 / JCM 11309 / KCTC 3954 / HTE831), this protein is Putative membrane protein insertion efficiency factor.